We begin with the raw amino-acid sequence, 737 residues long: Aryl hydrocarbon receptor nuclear translocator 2 (737 aa).

The interval 1 to 73 (MATPAAVNPS…SRYDDDQIPG (73 aa)) is disordered. The segment covering 64 to 73 (SRYDDDQIPG) has biased composition (basic and acidic residues). The 54-residue stretch at 78-131 (YARENHSEIERRRRNKMTQYITELSDMVPTCSALARKPDKLTILRMAVSHMKSM) folds into the bHLH domain. 2 PAS domains span residues 149–221 (TEQE…ENSM) and 340–406 (SMDM…QVVK). The PAC domain maps to 413-456 (SVMYRFRMKNREWMLIRTSSFTFQNPYSDEIEYIICTNTNVKQL). 2 disordered regions span residues 525 to 556 (MMVP…FSSS) and 588 to 721 (QVSW…TTNY). 2 stretches are compositionally biased toward polar residues: residues 528-543 (PSST…QGSP) and 588-626 (QVSW…YQAD). A compositionally biased stretch (low complexity) spans 627–642 (PSSYSPLSSPATSSPS). The segment covering 643–656 (GNAYSNLANRNTAF) has biased composition (polar residues). A compositionally biased stretch (low complexity) spans 659 to 688 (SGESSQSGGQFQGRPSEVWSQWQSQHHSQQ).

In terms of assembly, efficient DNA binding requires dimerization with another bHLH protein. Heterodimer with the aryl hydrocarbon receptor (AHR), SIM1 or HIF2A/EPAS-1. As to expression, isoform 1 and isoform 2 are most highly expressed in the brain, eye and skeletal muscle and to a lower degree in liver, heart, kidney and swim bladder. Isoform 3 is most highly expressed in the eye, forebrain, midbrain, hindbrain, skeletal muscle, gills and brain but is barely detectable in liver, heart, kidney and swim bladder. Before the pharyngula period isoform 3 is expressed throughout the entire embryo and during this period extensively in the brain and eye.

The protein resides in the nucleus. Its function is as follows. Transcription factor that plays a role in the development of the hypothalamo-pituitary axis. Specifically recognizes the xenobiotic response element (XRE). Isoform 1 acts as a transcriptional activator. Isoform 3 acts as a transcriptional repressor. This Danio rerio (Zebrafish) protein is Aryl hydrocarbon receptor nuclear translocator 2.